The following is a 94-amino-acid chain: MNKEQFDVNLVPTWRQGYRFQFEPAQNGFVILYPEGMIKLNESAGAIGQYIDGTNNVSAIIAQLKQQFGDIPEIDNDVIDYMLVAQQQHWIDLV.

The protein belongs to the PqqD family. In terms of assembly, monomer. Interacts with PqqE.

It functions in the pathway cofactor biosynthesis; pyrroloquinoline quinone biosynthesis. Functionally, functions as a PqqA binding protein and presents PqqA to PqqE, in the pyrroloquinoline quinone (PQQ) biosynthetic pathway. The polypeptide is PqqA binding protein (Acinetobacter baumannii (strain AB307-0294)).